The following is an 83-amino-acid chain: Ardiscretin (83 aa).

Residues methionine 1 to serine 20 form the signal peptide. An LCN-type CS-alpha/beta domain is found at lysine 21–glycine 82. 4 disulfides stabilise this stretch: cysteine 31–cysteine 81, cysteine 35–cysteine 57, cysteine 43–cysteine 62, and cysteine 47–cysteine 64. Cysteine amide is present on cysteine 81.

As to expression, expressed by the venom gland.

The protein resides in the secreted. Its function is as follows. Inhibits the sodium (Nav) currents in an apparent irreversible manner. Produces small depolarization and induces repetitive firing in squid axons. Is specific for arthropods (crickets, triatomides, crabs and squids), but is non-toxic to mice. Shows antibacterial activity against both Gram-positive and Gram-negative bacteria. This chain is Ardiscretin, found in Tityus discrepans (Venezuelan scorpion).